An 89-amino-acid chain; its full sequence is Small ribosomal subunit protein uS14A (89 aa).

Belongs to the universal ribosomal protein uS14 family. Part of the 30S ribosomal subunit. Contacts proteins S3 and S10.

Functionally, binds 16S rRNA, required for the assembly of 30S particles and may also be responsible for determining the conformation of the 16S rRNA at the A site. The sequence is that of Small ribosomal subunit protein uS14A from Listeria innocua serovar 6a (strain ATCC BAA-680 / CLIP 11262).